A 103-amino-acid chain; its full sequence is Large ribosomal subunit protein bL21 (103 aa).

The protein belongs to the bacterial ribosomal protein bL21 family. Part of the 50S ribosomal subunit. Contacts protein L20.

In terms of biological role, this protein binds to 23S rRNA in the presence of protein L20. This chain is Large ribosomal subunit protein bL21, found in Burkholderia mallei (strain NCTC 10247).